The following is a 270-amino-acid chain: Glucosamine-6-phosphate deaminase (270 aa).

Residue D72 is the Proton acceptor; for enolization step of the active site. Catalysis depends on D141, which acts as the For ring-opening step. The active-site Proton acceptor; for ring-opening step is the H143. E148 (for ring-opening step) is an active-site residue.

The protein belongs to the glucosamine/galactosamine-6-phosphate isomerase family. NagB subfamily. As to quaternary structure, homohexamer.

It carries out the reaction alpha-D-glucosamine 6-phosphate + H2O = beta-D-fructose 6-phosphate + NH4(+). It functions in the pathway amino-sugar metabolism; N-acetylneuraminate degradation; D-fructose 6-phosphate from N-acetylneuraminate: step 5/5. With respect to regulation, allosterically activated by N-acetylglucosamine 6-phosphate (GlcNAc6P). In terms of biological role, catalyzes the reversible isomerization-deamination of glucosamine 6-phosphate (GlcN6P) to form fructose 6-phosphate (Fru6P) and ammonium ion. This is Glucosamine-6-phosphate deaminase from Haemophilus influenzae (strain PittEE).